A 253-amino-acid polypeptide reads, in one-letter code: 3-deoxy-manno-octulosonate cytidylyltransferase (253 aa).

The protein belongs to the KdsB family.

The protein localises to the cytoplasm. It carries out the reaction 3-deoxy-alpha-D-manno-oct-2-ulosonate + CTP = CMP-3-deoxy-beta-D-manno-octulosonate + diphosphate. It functions in the pathway nucleotide-sugar biosynthesis; CMP-3-deoxy-D-manno-octulosonate biosynthesis; CMP-3-deoxy-D-manno-octulosonate from 3-deoxy-D-manno-octulosonate and CTP: step 1/1. Its pathway is bacterial outer membrane biogenesis; lipopolysaccharide biosynthesis. Functionally, activates KDO (a required 8-carbon sugar) for incorporation into bacterial lipopolysaccharide in Gram-negative bacteria. The chain is 3-deoxy-manno-octulosonate cytidylyltransferase from Acinetobacter baumannii (strain SDF).